The chain runs to 315 residues: Glutathione synthetase (315 aa).

Positions 125-310 (KLYTAWFADL…ITGMLMDAIE (186 aa)) constitute an ATP-grasp domain. 151 to 207 (WEKHGDIIMKPLDGMGGASIFRVKEGDPNIGVIAETLTELGNRYCMAQNYLPAIKDG) is an ATP binding site. Glutamate 281 and asparagine 283 together coordinate Mg(2+).

The protein belongs to the prokaryotic GSH synthase family. Mg(2+) serves as cofactor. The cofactor is Mn(2+).

It catalyses the reaction gamma-L-glutamyl-L-cysteine + glycine + ATP = glutathione + ADP + phosphate + H(+). The protein operates within sulfur metabolism; glutathione biosynthesis; glutathione from L-cysteine and L-glutamate: step 2/2. This is Glutathione synthetase from Salmonella typhimurium (strain LT2 / SGSC1412 / ATCC 700720).